Here is a 138-residue protein sequence, read N- to C-terminus: DNA-directed RNA polymerase subunit omega (138 aa).

The segment at 104–138 (GNSDGLENSSNSRDDNPLGRDNFFSTPENRNNTNS) is disordered. Residues 126–138 (FFSTPENRNNTNS) show a composition bias toward polar residues.

Belongs to the RNA polymerase subunit omega family. In terms of assembly, the RNAP catalytic core consists of 2 alpha, 1 beta, 1 beta' and 1 omega subunit. When a sigma factor is associated with the core the holoenzyme is formed, which can initiate transcription.

The catalysed reaction is RNA(n) + a ribonucleoside 5'-triphosphate = RNA(n+1) + diphosphate. Its function is as follows. Promotes RNA polymerase assembly. Latches the N- and C-terminal regions of the beta' subunit thereby facilitating its interaction with the beta and alpha subunits. This chain is DNA-directed RNA polymerase subunit omega, found in Ehrlichia chaffeensis (strain ATCC CRL-10679 / Arkansas).